Here is a 544-residue protein sequence, read N- to C-terminus: Membrane protein insertase YidC (544 aa).

5 helical membrane passes run 13–33 (LSLF…SNIL), 343–363 (WGLS…PLTF), 409–429 (LGGC…YSLV), 461–481 (LYFV…FTQL), and 506–526 (MPIM…IYWI).

It belongs to the OXA1/ALB3/YidC family. Type 1 subfamily. As to quaternary structure, interacts with the Sec translocase complex via SecD. Specifically interacts with transmembrane segments of nascent integral membrane proteins during membrane integration.

It is found in the cell inner membrane. In terms of biological role, required for the insertion and/or proper folding and/or complex formation of integral membrane proteins into the membrane. Involved in integration of membrane proteins that insert both dependently and independently of the Sec translocase complex, as well as at least some lipoproteins. Aids folding of multispanning membrane proteins. The sequence is that of Membrane protein insertase YidC from Borreliella burgdorferi (strain ATCC 35210 / DSM 4680 / CIP 102532 / B31) (Borrelia burgdorferi).